Here is a 516-residue protein sequence, read N- to C-terminus: uncharacterized protein (516 aa).

The next 9 membrane-spanning stretches (helical) occupy residues 183 to 203 (SAADLPIWEAASGAVLVGDGV), 261 to 281 (VLKTTFGFLAFGLIVSATYII), 308 to 328 (VMNGFLACLVMLATGIGTALL), 329 to 349 (LDHQFALVASVYLALTLAYSF), 356 to 376 (LLDVTVIGALFTLRIVMGQVL), 379 to 399 (LAFSPWLFSFSVMFFISLALA), 430 to 450 (LGHGLASASASIVIMLLFLAL), 461 to 481 (PAWLYVAPLGVSIWLQRIWLL), and 492 to 512 (IVFALNDKTSWFIGALIASAF).

The protein resides in the cell membrane. Its function is as follows. Possible permease/transporter. This is an uncharacterized protein from Sinorhizobium fredii (strain NBRC 101917 / NGR234).